The chain runs to 114 residues: Large ribosomal subunit protein bL20 (114 aa).

The protein belongs to the bacterial ribosomal protein bL20 family.

Its function is as follows. Binds directly to 23S ribosomal RNA and is necessary for the in vitro assembly process of the 50S ribosomal subunit. It is not involved in the protein synthesizing functions of that subunit. This chain is Large ribosomal subunit protein bL20, found in Flavobacterium psychrophilum (strain ATCC 49511 / DSM 21280 / CIP 103535 / JIP02/86).